Reading from the N-terminus, the 440-residue chain is Homocitrate synthase, mitochondrial (440 aa).

Residues Met-1–Tyr-23 are compositionally biased toward polar residues. A disordered region spans residues Met-1–Pro-27. A Pyruvate carboxyltransferase domain is found at Phe-37 to Arg-290. Position 45 (Arg-45) interacts with 2-oxoglutarate. Glu-46 contributes to the Mg(2+) binding site. His-105, Arg-165, and Thr-199 together coordinate 2-oxoglutarate. Residues His-226 and His-228 each contribute to the Mg(2+) site. The active-site Proton acceptor is His-323. Residue Ser-399 is modified to Phosphoserine. A Phosphothreonine modification is found at Thr-410.

The protein belongs to the alpha-IPM synthase/homocitrate synthase family. Homocitrate synthase LYS20/LYS21 subfamily. The cofactor is Mg(2+). Mn(2+) is required as a cofactor.

The protein resides in the mitochondrion. The catalysed reaction is acetyl-CoA + 2-oxoglutarate + H2O = (2R)-homocitrate + CoA + H(+). It participates in amino-acid biosynthesis; L-lysine biosynthesis via AAA pathway; L-alpha-aminoadipate from 2-oxoglutarate: step 1/5. In terms of biological role, catalyzes the aldol-type condensation of 2-oxoglutarate with acetyl-CoA to yield homocitrate. Carries out the first step of the alpha-aminoadipate (AAA) lysine biosynthesis pathway. This is Homocitrate synthase, mitochondrial (LYS21) from Saccharomyces cerevisiae (strain ATCC 204508 / S288c) (Baker's yeast).